An 864-amino-acid polypeptide reads, in one-letter code: NT-3 growth factor receptor (864 aa).

Positions 1-31 (MDVSLCPAKCSFWRIFLLGSVWLDYVGSVLA) are cleaved as a signal peptide. 2 cysteine pairs are disulfide-bonded: Cys-32–Cys-38 and Cys-36–Cys-45. The Extracellular portion of the chain corresponds to 32-429 (CPANCVCSKT…TVTHKPEEDT (398 aa)). N-linked (GlcNAc...) asparagine glycosylation is found at Asn-68, Asn-72, and Asn-79. LRR repeat units follow at residues 104–125 (GLQK…AFAK) and 128–149 (HLRY…LFQT). N-linked (GlcNAc...) asparagine glycosylation is found at Asn-133 and Asn-163. Residues 160–209 (NFFNCSCDIRWMQLWQEQGEARLDSQSLYCISADGSQLPLFRMNISQCDL) form the LRRCT domain. Disulfide bonds link Cys-164–Cys-189 and Cys-166–Cys-207. N-linked (GlcNAc...) asparagine glycans are attached at residues Asn-203, Asn-218, Asn-232, Asn-259, Asn-267, Asn-272, and Asn-294. Ig-like C2-type domains follow at residues 210 to 300 (PEIS…VALT) and 309 to 382 (SLVE…IAKN). Cys-231 and Cys-284 are oxidised to a cystine. The cysteines at positions 320 and 362 are disulfide-linked. Residues Asn-375 and Asn-388 are each glycosylated (N-linked (GlcNAc...) asparagine). A helical membrane pass occupies residues 430–453 (FGVSIAVGLAAFACVLLVVLFIMI). The Cytoplasmic portion of the chain corresponds to 454–864 (NKYGRRSKFG…ATPIYLDILG (411 aa)). Ser-493 bears the Phosphoserine mark. A Phosphotyrosine; by autocatalysis modification is found at Tyr-516. Residues 538-853 (IVLKRELGEG…EIYKILHALG (316 aa)) form the Protein kinase domain. Residues 544 to 552 (LGEGAFGKV) and Lys-572 each bind ATP. The active-site Proton acceptor is Asp-679. Phosphotyrosine; by autocatalysis occurs at positions 705, 709, 710, and 859.

This sequence belongs to the protein kinase superfamily. Tyr protein kinase family. Insulin receptor subfamily. As to quaternary structure, exists in a dynamic equilibrium between monomeric (low affinity) and dimeric (high affinity) structures. Binds SH2B2. Interacts with SQSTM1 and KIDINS220. Interacts with PTPRS. Interacts with MAPK8IP3/JIP3. In terms of processing, ligand-mediated auto-phosphorylation. In terms of tissue distribution, widely expressed, mainly in the nervous tissue.

The protein resides in the membrane. The enzyme catalyses L-tyrosyl-[protein] + ATP = O-phospho-L-tyrosyl-[protein] + ADP + H(+). Receptor tyrosine kinase involved in nervous system and probably heart development. Upon binding of its ligand NTF3/neurotrophin-3, NTRK3 autophosphorylates and activates different signaling pathways, including the phosphatidylinositol 3-kinase/AKT and the MAPK pathways, that control cell survival and differentiation. NTRK3 isoforms containing insertions within the kinase domain can autophosphorylate in response to NTF3/neurotrophin-3, but cannot mediate downstream phenotypic responses. In Rattus norvegicus (Rat), this protein is NT-3 growth factor receptor (Ntrk3).